Here is a 150-residue protein sequence, read N- to C-terminus: Dual specificity protein phosphatase 23 (150 aa).

The 144-residue stretch at 7–150 folds into the Tyrosine-protein phosphatase domain; sequence NFSWVLPGRL…AVFQFYQRTK (144 aa). The active-site Phosphocysteine intermediate is Cys-95.

The protein belongs to the protein-tyrosine phosphatase family. Non-receptor class dual specificity subfamily. In terms of tissue distribution, widely expressed.

Its subcellular location is the cytoplasm. The protein resides in the cytosol. The protein localises to the nucleus. It catalyses the reaction O-phospho-L-tyrosyl-[protein] + H2O = L-tyrosyl-[protein] + phosphate. The enzyme catalyses O-phospho-L-seryl-[protein] + H2O = L-seryl-[protein] + phosphate. The catalysed reaction is O-phospho-L-threonyl-[protein] + H2O = L-threonyl-[protein] + phosphate. In terms of biological role, protein phosphatase that mediates dephosphorylation of proteins phosphorylated on Tyr and Ser/Thr residues. In vitro, it can dephosphorylate p44-ERK1 (MAPK3) but not p54 SAPK-beta (MAPK10) in vitro. Able to enhance activation of JNK and p38 (MAPK14). The chain is Dual specificity protein phosphatase 23 (Dusp23) from Mus musculus (Mouse).